A 369-amino-acid chain; its full sequence is tRNA-specific 2-thiouridylase MnmA (369 aa).

ATP contacts are provided by residues 16 to 23 (AMSGGVDS) and M42. Residue C110 is the Nucleophile of the active site. Cysteines 110 and 206 form a disulfide. G134 contributes to the ATP binding site. Positions 156–158 (KDQ) are interaction with tRNA. C206 acts as the Cysteine persulfide intermediate in catalysis.

The protein belongs to the MnmA/TRMU family.

The protein localises to the cytoplasm. It carries out the reaction S-sulfanyl-L-cysteinyl-[protein] + uridine(34) in tRNA + AH2 + ATP = 2-thiouridine(34) in tRNA + L-cysteinyl-[protein] + A + AMP + diphosphate + H(+). Catalyzes the 2-thiolation of uridine at the wobble position (U34) of tRNA, leading to the formation of s(2)U34. The polypeptide is tRNA-specific 2-thiouridylase MnmA (Orientia tsutsugamushi (strain Boryong) (Rickettsia tsutsugamushi)).